The following is a 687-amino-acid chain: Polyphosphate kinase (687 aa).

Asn-45 is a binding site for ATP. Mg(2+) contacts are provided by Arg-375 and Arg-405. The active-site Phosphohistidine intermediate is His-435. ATP is bound by residues Tyr-472, Arg-568, and His-596.

It belongs to the polyphosphate kinase 1 (PPK1) family. Requires Mg(2+) as cofactor. Post-translationally, an intermediate of this reaction is the autophosphorylated ppk in which a phosphate is covalently linked to a histidine residue through a N-P bond.

The catalysed reaction is [phosphate](n) + ATP = [phosphate](n+1) + ADP. In terms of biological role, catalyzes the reversible transfer of the terminal phosphate of ATP to form a long-chain polyphosphate (polyP). This chain is Polyphosphate kinase, found in Burkholderia lata (strain ATCC 17760 / DSM 23089 / LMG 22485 / NCIMB 9086 / R18194 / 383).